A 409-amino-acid polypeptide reads, in one-letter code: uncharacterized protein (409 aa).

A compositionally biased stretch (basic and acidic residues) spans 36–50; it reads HLKAKARAQESDSDR. Disordered stretches follow at residues 36–67, 239–298, and 338–373; these read HLKA…TFSS, IENT…SSTI, and RSQI…TGPR. Low complexity predominate over residues 51 to 67; the sequence is PCSSIESSSEPASTFSS. Over residues 245 to 265 the composition is skewed to basic and acidic residues; it reads VREESNQEHPPGKQEKTEKHP. Over residues 268-281 the composition is skewed to polar residues; that stretch reads LQGSHQAEPETSSK. 2 stretches are compositionally biased toward basic and acidic residues: residues 282–294 and 338–350; these read NSEE…KMDD and RSQI…EGRR.

This is an uncharacterized protein from Homo sapiens (Human).